Consider the following 505-residue polypeptide: Poxin-Schlafen (505 aa).

The segment at 1 to 238 is poxin-like; that stretch reads MAMFYAHAFG…SKEERVDYVL (238 aa). The active-site Proton donor is His17. Tyr138 serves as the catalytic Shared with catalytic histidine of dimeric partner. The Proton acceptor; shared with catalytic histidine of dimeric partner role is filled by Lys142. Positions 239–505 are schlafen-like; sequence MKRLESIRHL…PDEWVSHIKF (267 aa).

This sequence in the N-terminal section; belongs to the poxin family. It in the C-terminal section; belongs to the Schlafen protein family. Subgroup poxviridae B3 subfamily. In terms of assembly, homodimer.

It carries out the reaction 2',3'-cGAMP + H2O = Gp(2'-5')Ap(3') + H(+). Nuclease that is responsible for viral evasion of host cGAS-STING innate immunity. Cleaves 2',3'-cGAMP which is produced by host cGAS following recognition of cytosolic DNA and blocks the subsequent 2',3'-cGAMP-mediated activation of TMEM173/STING, which normally spreads to adjacent cells and activates the interferon and NF-kappa-B immune responses. In Bos taurus (Bovine), this protein is Poxin-Schlafen (OPG188).